A 520-amino-acid chain; its full sequence is GMP synthase [glutamine-hydrolyzing] (520 aa).

The Glutamine amidotransferase type-1 domain occupies 9 to 202 (SVLIIDFGSQ…VHNIAGITGD (194 aa)). Residue Cys86 is the Nucleophile of the active site. Residues His176 and Glu178 contribute to the active site. Residues 203–395 (WSMSAYRAKA…LGLPDSFIGR (193 aa)) enclose the GMPS ATP-PPase domain. Residue 230–236 (SGGVDSS) participates in ATP binding.

Homodimer.

It catalyses the reaction XMP + L-glutamine + ATP + H2O = GMP + L-glutamate + AMP + diphosphate + 2 H(+). The protein operates within purine metabolism; GMP biosynthesis; GMP from XMP (L-Gln route): step 1/1. Its function is as follows. Catalyzes the synthesis of GMP from XMP. This Allorhizobium ampelinum (strain ATCC BAA-846 / DSM 112012 / S4) (Agrobacterium vitis (strain S4)) protein is GMP synthase [glutamine-hydrolyzing].